Reading from the N-terminus, the 355-residue chain is Chorismate synthase (355 aa).

Position 46 (Arg-46) interacts with NADP(+). Residues Arg-123–Ser-125, Asn-233–Gly-234, Gly-273, Lys-288–Ser-292, and Arg-314 each bind FMN.

This sequence belongs to the chorismate synthase family. Homotetramer. It depends on FMNH2 as a cofactor.

The enzyme catalyses 5-O-(1-carboxyvinyl)-3-phosphoshikimate = chorismate + phosphate. It participates in metabolic intermediate biosynthesis; chorismate biosynthesis; chorismate from D-erythrose 4-phosphate and phosphoenolpyruvate: step 7/7. Catalyzes the anti-1,4-elimination of the C-3 phosphate and the C-6 proR hydrogen from 5-enolpyruvylshikimate-3-phosphate (EPSP) to yield chorismate, which is the branch point compound that serves as the starting substrate for the three terminal pathways of aromatic amino acid biosynthesis. This reaction introduces a second double bond into the aromatic ring system. This is Chorismate synthase from Campylobacter concisus (strain 13826).